Reading from the N-terminus, the 1304-residue chain is Probable inactive serine/threonine-protein kinase fnkC (1304 aa).

Residues 33–402 (FEIIRILKKD…TNLLLTHKFI (370 aa)) form the Protein kinase domain. ATP-binding positions include 39 to 47 (LKKDEFSTT) and lysine 68. The interval 208 to 277 (KDNNNNNNNN…EAEGGGGGGE (70 aa)) is disordered. Low complexity predominate over residues 210 to 269 (NNNNNNNNNNNNNNNNNNNNNNNNNNNNNNANNSNNNTLNNLSIVNNNSSSSSNDNSSEA). FNIP repeat units lie at residues 514 to 556 (HSKS…LGSD), 710 to 753 (FNQL…FGRC), 754 to 797 (FNQP…FGSQ), 798 to 841 (YNQP…FGES), and 900 to 943 (YNDI…FGCD). MATH domains lie at 1025–1154 (QGSW…RIDA) and 1172–1291 (NQAF…NVSI).

Belongs to the protein kinase superfamily. STE Ser/Thr protein kinase family.

This is Probable inactive serine/threonine-protein kinase fnkC (fnkC) from Dictyostelium discoideum (Social amoeba).